We begin with the raw amino-acid sequence, 113 residues long: Dolichyl-diphosphooligosaccharide--protein glycosyltransferase subunit DAD1 (113 aa).

N-acetylserine is present on Ser2. Residues 2 to 30 (SASVLSVISRFLEEYLSSTPQRLKLLDAY) are Cytoplasmic-facing. A helical membrane pass occupies residues 31–51 (LLYILLTGALQFGYCLLVGTF). Position 52 (Pro52) is a topological domain, lumenal. The helical transmembrane segment at 53 to 73 (FNSFLSGFISCVGSFILAVCL) threads the bilayer. The Cytoplasmic portion of the chain corresponds to 74 to 92 (RIQINPQNKADFQGISPER). Residues 93–113 (AFADFLFASTILHLVVMNFVG) traverse the membrane as a helical segment.

Belongs to the DAD/OST2 family. In terms of assembly, component of the oligosaccharyltransferase (OST) complex. OST exists in two different complex forms which contain common core subunits RPN1, RPN2, OST48, OST4, DAD1 and TMEM258, either STT3A or STT3B as catalytic subunits, and form-specific accessory subunits. STT3A complex assembly occurs through the formation of 3 subcomplexes. Subcomplex 1 contains RPN1 and TMEM258, subcomplex 2 contains the STT3A-specific subunits STT3A, DC2/OSTC, and KCP2 as well as the core subunit OST4, and subcomplex 3 contains RPN2, DAD1, and OST48. The STT3A complex can form stable complexes with the Sec61 complex or with both the Sec61 and TRAP complexes.

It is found in the endoplasmic reticulum membrane. The protein operates within protein modification; protein glycosylation. Functionally, subunit of the oligosaccharyl transferase (OST) complex that catalyzes the initial transfer of a defined glycan (Glc(3)Man(9)GlcNAc(2) in eukaryotes) from the lipid carrier dolichol-pyrophosphate to an asparagine residue within an Asn-X-Ser/Thr consensus motif in nascent polypeptide chains, the first step in protein N-glycosylation. N-glycosylation occurs cotranslationally and the complex associates with the Sec61 complex at the channel-forming translocon complex that mediates protein translocation across the endoplasmic reticulum (ER). All subunits are required for a maximal enzyme activity. The chain is Dolichyl-diphosphooligosaccharide--protein glycosyltransferase subunit DAD1 from Sus scrofa (Pig).